The sequence spans 494 residues: Ketol-acid reductoisomerase (NADP(+)) (494 aa).

The KARI N-terminal Rossmann domain occupies 14 to 208 (LDQLGRCRFM…GGHRAGVLES (195 aa)). Residues 45–48 (CGAQ), Arg-68, Arg-76, Ser-78, and 108–110 (DKQ) contribute to the NADP(+) site. His-132 is an active-site residue. NADP(+) is bound at residue Gly-158. KARI C-terminal knotted domains lie at 209 to 344 (SFVA…NYPV) and 345 to 487 (TDVE…MTDM). Asp-217, Glu-221, Glu-389, and Glu-393 together coordinate Mg(2+). Ser-414 is a binding site for substrate.

It belongs to the ketol-acid reductoisomerase family. Mg(2+) is required as a cofactor.

The catalysed reaction is (2R)-2,3-dihydroxy-3-methylbutanoate + NADP(+) = (2S)-2-acetolactate + NADPH + H(+). It catalyses the reaction (2R,3R)-2,3-dihydroxy-3-methylpentanoate + NADP(+) = (S)-2-ethyl-2-hydroxy-3-oxobutanoate + NADPH + H(+). It participates in amino-acid biosynthesis; L-isoleucine biosynthesis; L-isoleucine from 2-oxobutanoate: step 2/4. It functions in the pathway amino-acid biosynthesis; L-valine biosynthesis; L-valine from pyruvate: step 2/4. Functionally, involved in the biosynthesis of branched-chain amino acids (BCAA). Catalyzes an alkyl-migration followed by a ketol-acid reduction of (S)-2-acetolactate (S2AL) to yield (R)-2,3-dihydroxy-isovalerate. In the isomerase reaction, S2AL is rearranged via a Mg-dependent methyl migration to produce 3-hydroxy-3-methyl-2-ketobutyrate (HMKB). In the reductase reaction, this 2-ketoacid undergoes a metal-dependent reduction by NADPH to yield (R)-2,3-dihydroxy-isovalerate. The chain is Ketol-acid reductoisomerase (NADP(+)) from Photobacterium profundum (strain SS9).